We begin with the raw amino-acid sequence, 176 residues long: Mediator of RNA polymerase II transcription subunit 11 (176 aa).

The tract at residues 98–176 is disordered; it reads SRVRELEETK…MGGDSSMSTN (79 aa). Residues 99 to 108 are compositionally biased toward basic and acidic residues; sequence RVRELEETKA. A compositionally biased stretch (low complexity) spans 124–154; it reads HAAAQQQQQQQQQQQQQQQQMQQAAQQQQQQ.

Belongs to the Mediator complex subunit 11 family. In terms of assembly, component of the Mediator complex, which may include CDK8, MED4, MED6, MED11, MED14, MED17, MED18, MED20, MED21, MED22, MED27, MED28, MED30 and MED31.

It is found in the nucleus. Functionally, component of the Mediator complex, a coactivator involved in the regulated transcription of nearly all RNA polymerase II-dependent genes. Mediator functions as a bridge to convey information from gene-specific regulatory proteins to the basal RNA polymerase II transcription machinery. Mediator is recruited to promoters by direct interactions with regulatory proteins and serves as a scaffold for the assembly of a functional pre-initiation complex with RNA polymerase II and the general transcription factors. The polypeptide is Mediator of RNA polymerase II transcription subunit 11 (MED11) (Drosophila melanogaster (Fruit fly)).